The sequence spans 210 residues: Uridine kinase (210 aa).

12–19 is an ATP binding site; sequence GGSGGGKT.

The protein belongs to the uridine kinase family.

The protein localises to the cytoplasm. The catalysed reaction is uridine + ATP = UMP + ADP + H(+). It carries out the reaction cytidine + ATP = CMP + ADP + H(+). Its pathway is pyrimidine metabolism; CTP biosynthesis via salvage pathway; CTP from cytidine: step 1/3. It functions in the pathway pyrimidine metabolism; UMP biosynthesis via salvage pathway; UMP from uridine: step 1/1. The sequence is that of Uridine kinase from Streptococcus gordonii (strain Challis / ATCC 35105 / BCRC 15272 / CH1 / DL1 / V288).